We begin with the raw amino-acid sequence, 89 residues long: Small ribosomal subunit protein uS14 (89 aa).

It belongs to the universal ribosomal protein uS14 family. In terms of assembly, part of the 30S ribosomal subunit. Contacts proteins S3 and S10.

In terms of biological role, binds 16S rRNA, required for the assembly of 30S particles and may also be responsible for determining the conformation of the 16S rRNA at the A site. The protein is Small ribosomal subunit protein uS14 of Amoebophilus asiaticus (strain 5a2).